Here is a 201-residue protein sequence, read N- to C-terminus: Small ribosomal subunit protein uS4 (201 aa).

Positions cysteine 93–asparagine 155 constitute an S4 RNA-binding domain.

It belongs to the universal ribosomal protein uS4 family. As to quaternary structure, part of the 30S ribosomal subunit. Contacts protein S5. The interaction surface between S4 and S5 is involved in control of translational fidelity.

Its function is as follows. One of the primary rRNA binding proteins, it binds directly to 16S rRNA where it nucleates assembly of the body of the 30S subunit. With S5 and S12 plays an important role in translational accuracy. In Elusimicrobium minutum (strain Pei191), this protein is Small ribosomal subunit protein uS4.